A 1009-amino-acid chain; its full sequence is MSGVSEPLSRVKVGTLRRPEGPPEPMVVVPVDVEKEDVRILKVCFYSNSFNPGKNFKLVKCTVQTEIQEIITSILLSGRIGPNIQLAECYGLRLKHMKSDEIHWLHPQMTVGEVQDKYECLHVEAEWRYDLQIRYLPEDFMESLKEDRTTLLYFYQQLRNDYMQRYASKVSEGMALQLGCLELRRFFKDMPHNALDKKSNFELLEKEVGLDLFFPKQMQENLKPKQFRKMIQQTFQQYASLREEECVMKFFNTLAGFANIDQETYRCELIQGWNITVDLVIGPKGIRQLTSQDTKPTCLAEFKQIKSIRCLPLEETQAVLQLGIEGAPQSLSIKTSSLAEAENMADLIDGYCRLQGEHKGSLIMHAKKDGEKRNSLPQIPTLNLEARRSHLSESCSIESDIYAEIPDETLRRPGGPQYGVAREEVVLNRILGEGFFGEVYEGVYTNHKGEKINVAVKTCKKDCTQDNKEKFMSEAVIMKNLDHPHIVKLIGIIEEEPTWIIMELYPYGELGHYLERNKNSLKVPTLVLYTLQICKAMAYLESINCVHRDIAVRNILVASPECVKLGDFGLSRYIEDEDYYKASVTRLPIKWMSPESINFRRFTTASDVWMFAVCMWEILSFGKQPFFWLENKDVIGVLEKGDRLPKPELCPPVLYTLMTRCWDYDPSDRPRFTELVCSLSDIYQMEKDIAIEQERNARYRPPKILEPTTFQEPPPKPSRPKYRPPPQTNLLAPKLQFQVPEGLCASSPTLTSPMEYPSPVNSLHTPPLHRHNVFKRHSMREEDFIRPSSREEAQQLWEAEKIKMKQVLERQQKQMVEDSQWLRREERCLDPMVYMNDKSPLTPEKEAGYTEFTGPPQKPPRLGAQSIQPTANLDRTDDLVYHNVMTLVEAVLELKNKLGQLPPEDYVVVVKNVGLNLRKLIGSVDDLLPSLPASSRTEIEGTQKLLNKDLAELINKMKLAQQNAVTSLSEDCKRQMLTASHTLAVDAKNLLDAVDQAKVVANLAHPPAE.

Positions 39–359 constitute an FERM domain; the sequence is RILKVCFYSN…GYCRLQGEHK (321 aa). 3 positions are modified to phosphoserine: S361, S375, and S399. Residue Y402 is modified to Phosphotyrosine; by autocatalysis. The Protein kinase domain occupies 425–683; it reads VVLNRILGEG…ELVCSLSDIY (259 aa). ATP contacts are provided by residues 431–439, K457, and 503–509; these read LGEGFFGEV and ELYPYGE. D549 functions as the Proton acceptor in the catalytic mechanism. Y579 carries the post-translational modification Phosphotyrosine. Y580 is subject to Phosphotyrosine; by SRC, FYN and LCK. The segment at 696 to 728 is disordered; that stretch reads NARYRPPKILEPTTFQEPPPKPSRPKYRPPPQT. A compositionally biased stretch (pro residues) spans 712 to 727; sequence EPPPKPSRPKYRPPPQ. Position 722 is a phosphotyrosine (Y722). A Phosphoserine modification is found at S762. T765 bears the Phosphothreonine mark. The tract at residues 801 to 1009 is interaction with TGFB1I1; sequence KIKMKQVLER…VANLAHPPAE (209 aa). At Y834 the chain carries Phosphotyrosine. Phosphoserine is present on S839. T842 is subject to Phosphothreonine. Position 849 is a phosphotyrosine (Y849). A Phosphoserine modification is found at S866. The interval 868–1009 is focal adhesion targeting (FAT); sequence QPTANLDRTD…VANLAHPPAE (142 aa). Y881 carries the phosphotyrosine modification.

It belongs to the protein kinase superfamily. Tyr protein kinase family. FAK subfamily. As to quaternary structure, homodimer, or homooligomer. Interacts with KCNA2. Interacts with NPHP1, ASAP1, ASAP2, ARHGAP26, SKAP2 and TGFB1I1. The Tyr-402 phosphorylated form interacts with SRC (via SH2 domain) and SRC family members. Forms a signaling complex with EPHA1, LCK and phosphatidylinositol 3-kinase; upon activation by EFNA1. Interacts with GRB2 (via SH2 domain). Interacts with P53/TP53 and MDM2. Interacts with MYLK. Interacts with BCAR1. Interacts with RB1CC1. Interacts with RHOU. Interacts with VAV1. Interacts with PDPK1. Interacts with DLG4. Interacts with LPXN and PTPN12. Interacts with SIRPA and SH2D3C. Interacts (hypophosphorylated) with PXN. Interacts with ARHGAP10. Phosphorylated on tyrosine residues in response to various stimuli that elevate the intracellular calcium concentration; this activation is indirect and may be mediated by production of reactive oxygen species (ROS). Tyr-402 is the major autophosphorylation site, but other kinases can also phosphorylate Tyr-402. Autophosphorylation occurs in trans, i.e. one subunit of the dimeric receptor phosphorylates tyrosine residues on the other subunit. Phosphorylation at Tyr-402 promotes interaction with SRC and SRC family members, leading to phosphorylation at Tyr-579; Tyr-580 and Tyr-881. Phosphorylation at Tyr-881 is important for interaction with GRB2. Phosphorylated on tyrosine residues upon activation of FGR and PKC. Recruitment by NPHP1 to cell matrix adhesions initiates Tyr-402 phosphorylation. In monocytes, adherence to substrata is required for tyrosine phosphorylation and kinase activation. Angiotensin II, thapsigargin and L-alpha-lysophosphatidic acid (LPA) also induce autophosphorylation and increase kinase activity. Phosphorylation by MYLK promotes ITGB2 activation and is thus essential to trigger neutrophil transmigration during lung injury. Dephosphorylated by PTPN12.

The protein resides in the cytoplasm. The protein localises to the perinuclear region. It is found in the cell membrane. Its subcellular location is the cell junction. It localises to the focal adhesion. The protein resides in the cell projection. The protein localises to the lamellipodium. It is found in the cell cortex. Its subcellular location is the nucleus. The enzyme catalyses L-tyrosyl-[protein] + ATP = O-phospho-L-tyrosyl-[protein] + ADP + H(+). Its activity is regulated as follows. Activated in response to stimuli that lead to increased intracellular Ca(2+) levels; this activation is indirect and may be mediated by calcium-mediated production of reactive oxygen species (ROS). Activated by autophosphorylation at Tyr-402; this creates a binding site for SRC family kinases and leads to phosphorylation at additional tyrosine residues. Phosphorylation at Tyr-402, Tyr-579 and Tyr-580 is required for optimal kinase activity. In terms of biological role, non-receptor protein-tyrosine kinase that regulates reorganization of the actin cytoskeleton, cell polarization, cell migration, adhesion, spreading and bone remodeling. Plays a role in the regulation of the humoral immune response, and is required for normal levels of marginal B-cells in the spleen and normal migration of splenic B-cells. Required for normal macrophage polarization and migration towards sites of inflammation. Regulates cytoskeleton rearrangement and cell spreading in T-cells, and contributes to the regulation of T-cell responses. Promotes osteoclastic bone resorption; this requires both PTK2B/PYK2 and SRC. May inhibit differentiation and activity of osteoprogenitor cells. Functions in signaling downstream of integrin and collagen receptors, immune receptors, G-protein coupled receptors (GPCR), cytokine, chemokine and growth factor receptors, and mediates responses to cellular stress. Forms multisubunit signaling complexes with SRC and SRC family members upon activation; this leads to the phosphorylation of additional tyrosine residues, creating binding sites for scaffold proteins, effectors and substrates. Regulates numerous signaling pathways. Promotes activation of phosphatidylinositol 3-kinase and of the AKT1 signaling cascade. Promotes activation of NOS3. Regulates production of the cellular messenger cGMP. Promotes activation of the MAP kinase signaling cascade, including activation of MAPK1/ERK2, MAPK3/ERK1 and MAPK8/JNK1. Promotes activation of Rho family GTPases, such as RHOA and RAC1. Recruits the ubiquitin ligase MDM2 to P53/TP53 in the nucleus, and thereby regulates P53/TP53 activity, P53/TP53 ubiquitination and proteasomal degradation. Acts as a scaffold, binding to both PDPK1 and SRC, thereby allowing SRC to phosphorylate PDPK1 at 'Tyr-9, 'Tyr-373', and 'Tyr-376'. Promotes phosphorylation of NMDA receptors by SRC family members, and thereby contributes to the regulation of NMDA receptor ion channel activity and intracellular Ca(2+) levels. May also regulate potassium ion transport by phosphorylation of potassium channel subunits. Phosphorylates SRC; this increases SRC kinase activity. Phosphorylates ASAP1, NPHP1, KCNA2 and SHC1. Promotes phosphorylation of ASAP2, RHOU and PXN; this requires both SRC and PTK2/PYK2. The sequence is that of Protein-tyrosine kinase 2-beta (Ptk2b) from Mus musculus (Mouse).